We begin with the raw amino-acid sequence, 487 residues long: Protein nucleotidyltransferase YdiU (487 aa).

ATP-binding residues include G90, G92, R93, K113, D125, G126, R176, and R183. D252 (proton acceptor) is an active-site residue. Positions 253 and 262 each coordinate Mg(2+). Position 262 (D262) interacts with ATP.

This sequence belongs to the SELO family. Mg(2+) serves as cofactor. The cofactor is Mn(2+).

The enzyme catalyses L-seryl-[protein] + ATP = 3-O-(5'-adenylyl)-L-seryl-[protein] + diphosphate. It carries out the reaction L-threonyl-[protein] + ATP = 3-O-(5'-adenylyl)-L-threonyl-[protein] + diphosphate. It catalyses the reaction L-tyrosyl-[protein] + ATP = O-(5'-adenylyl)-L-tyrosyl-[protein] + diphosphate. The catalysed reaction is L-histidyl-[protein] + UTP = N(tele)-(5'-uridylyl)-L-histidyl-[protein] + diphosphate. The enzyme catalyses L-seryl-[protein] + UTP = O-(5'-uridylyl)-L-seryl-[protein] + diphosphate. It carries out the reaction L-tyrosyl-[protein] + UTP = O-(5'-uridylyl)-L-tyrosyl-[protein] + diphosphate. Nucleotidyltransferase involved in the post-translational modification of proteins. It can catalyze the addition of adenosine monophosphate (AMP) or uridine monophosphate (UMP) to a protein, resulting in modifications known as AMPylation and UMPylation. The polypeptide is Protein nucleotidyltransferase YdiU (Pseudomonas syringae pv. tomato (strain ATCC BAA-871 / DC3000)).